Reading from the N-terminus, the 293-residue chain is Magnetosome protein MamB (293 aa).

Topologically, residues 1-12 are cytoplasmic; the sequence is MTTAACRKCRDE. The tract at residues 1 to 214 is transmembrane domain (TMD); sequence MTTAACRKCR…GLMDTSVEND (214 aa). A helical transmembrane segment spans residues 13–33; that stretch reads VIWWAFFINIGQTTYKGVLGV. At 34–78 the chain is on the lumenal side; the sequence is LSGSAALVADAMHSGADVVATLVTMFSVKVSDKKADEKYPFGYGN. The chain crosses the membrane as a helical span at residues 79-99; it reads IQFIASSIVGLILFFGALYLM. Topologically, residues 100–105 are cytoplasmic; that stretch reads YESTMQ. Residues 106–126 form a helical membrane-spanning segment; that stretch reads IIAGNTSSPSPFAVLGAIVSI. At 127–158 the chain is on the lumenal side; the sequence is ATNELMFRYQSCVGRQNNSPAIIANAWDNRSD. The chain crosses the membrane as a helical span at residues 159–179; sequence ALSSVAVLIGIVAAVVGFPIA. At 180 to 293 the chain is on the cytoplasmic side; that stretch reads DRLAAIGVGI…VGVTPVRIAA (114 aa). A C-terminal domain (CTD) region spans residues 215–293; that stretch reads VLVDAYNIAK…VGVTPVRIAA (79 aa). Residues His245, Asp247, and His283 each coordinate Zn(2+).

Belongs to the cation diffusion facilitator (CDF) transporter (TC 2.A.4) family. In terms of assembly, the isolated C-terminal domain (approximately 213-293) forms homodimers. Forms heterodimers with MamM.

The protein resides in the magnetosome membrane. Functionally, plays a dual, essential role in magnetosome formation; required for magnetosome vesicle formation as well as biomineralization. Probably binds and transports iron. Requires heterodimerization with MamM for stability. The sequence is that of Magnetosome protein MamB (mamB) from Magnetospira sp. (strain QH-2) (Marine magnetic spirillum (strain QH-2)).